The primary structure comprises 947 residues: Transcriptional regulator WAR1 (947 aa).

Positions 1 to 10 are enriched in basic and acidic residues; that stretch reads MSDTTPEKGS. Residues 1–52 are disordered; that stretch reads MSDTTPEKGSVDSVSPSASNGSNTNNPLNNSSPQPLKSNESDKKPKVTRRSV. Over residues 19 to 38 the composition is skewed to low complexity; that stretch reads SNGSNTNNPLNNSSPQPLKS. The segment at residues 54 to 86 is a DNA-binding region (zn(2)-C6 fungal-type); it reads CKSCHSLKVKCTPSDPNNPSAPCVRCINANRIC. The disordered stretch occupies residues 96–222; sequence RRKKSEILEA…SPTSKDDEIN (127 aa). Positions 129 to 142 are enriched in low complexity; that stretch reads NSSENYSSSINNAN. 2 stretches are compositionally biased toward polar residues: residues 143 to 158 and 167 to 185; these read DSSL…TFDP and QASS…QSAA.

In terms of assembly, homodimer.

The protein resides in the nucleus. In terms of biological role, transcription factor required for yeast cell adherence to silicone substrate. Plays a role in resistance to weak organic acids such as acetate and sorbate. Binds in vitro to a nitric oxide-responsive element (NORE) but seems not to be involved in response to nitrosative stress. In Candida albicans (strain SC5314 / ATCC MYA-2876) (Yeast), this protein is Transcriptional regulator WAR1 (WAR1).